Here is a 947-residue protein sequence, read N- to C-terminus: Bromodomain testis-specific protein (947 aa).

The region spanning 27–133 (RLTNQLQYLQ…KLFMQKLSQM (107 aa)) is the Bromo 1 domain. Asn109 serves as a coordination point for JQ1. Ser187 carries the post-translational modification Phosphoserine. Residues 202–228 (QTAAQVTKGVKRKADTTTPATSAVKAS) are disordered. A Nuclear localization signal motif is present at residues 209-220 (KGVKRKADTTTP). Residues 217–228 (TTTPATSAVKAS) are compositionally biased toward polar residues. A Bromo 2 domain is found at 267–376 (VKVTEQLRHC…DVFETHFSKI (110 aa)). Disordered stretches follow at residues 395 to 420 (ETTG…DERV), 444 to 511 (PFRK…KPMN), 610 to 698 (NNQL…IPPE), and 882 to 924 (NKCS…RRRE). A coiled-coil region spans residues 417 to 470 (DERVKRLAKLQEQLKAVHQQLQVLSQVPFRKLNKKKEKSKKEKKKEKVNNSNEN). Positions 447–462 (KLNKKKEKSKKEKKKE) are enriched in basic residues. Basic and acidic residues predominate over residues 470 to 481 (NPRKMCEQMRLK). A compositionally biased stretch (basic residues) spans 482–494 (EKSKRNQPKKRKQ). One can recognise an NET domain in the interval 500–582 (KSEDEDNAKP…ACLRKRPLKP (83 aa)). Residues 591–621 (KEELHSQKKQELEKRLLDVNNQLNSRKRQTK) are a coiled coil. Low complexity predominate over residues 637–662 (LSESSSSSSSSSESESSSSDLSSSDS). 2 stretches are compositionally biased toward basic and acidic residues: residues 674-692 (TEVK…KMKN) and 885-924 (SGEE…RRRE).

This sequence belongs to the BET family. In terms of assembly, interacts with mRNA splicing machinery proteins SRSF2, DDX5, HNRNPK and TARDBP. Interacts with the acetylated N-terminus of histone H1, H2, H3 and H4. Interacts with P-TEFb components CDK9 and CCNT1/cyclin-T1. Interacts with SMARCE1. Interacts with the acetylated N-terminus of histone H1.4, H2A, H2B, H3 and H4. In terms of processing, ubiquitinated in a SPOP-dependent manner, leading to proteasomal degradation. Testis-specific. A 3-fold higher expression is seen in adult testis than in embryo testis. Expression seems to be correlated with histone H4 hyperacetylation during the haploid phase of spermatogenesis (spermiogenesis). No expression, or very low expression is seen in patients' testes with abnormal spermatogenesis. Expressed in cancers such as non-small cell lung cancer and squamous cell carcinomas of the head and neck as well as of esophagus, but not in melanoma or in cancers of the colon, breast, kidney and bladder.

It localises to the nucleus. Its function is as follows. Testis-specific chromatin protein that specifically binds histone H4 acetylated at 'Lys-5' and 'Lys-8' (H4K5ac and H4K8ac, respectively) and plays a key role in spermatogenesis. Required in late pachytene spermatocytes: plays a role in meiotic and post-meiotic cells by binding to acetylated histones at the promoter of specific meiotic and post-meiotic genes, facilitating their activation at the appropriate time. In the post-meiotic phase of spermatogenesis, binds to hyperacetylated histones and participates in their general removal from DNA. Also recognizes and binds a subset of butyrylated histones: able to bind histone H4 butyrylated at 'Lys-8' (H4K8ac), while it is not able to bind H4 butyrylated at 'Lys-5' (H4K5ac). Also acts as a component of the splicing machinery in pachytene spermatocytes and round spermatids and participates in 3'-UTR truncation of specific mRNAs in post-meiotic spermatids. Required for chromocenter organization, a structure comprised of peri-centromeric heterochromatin. This chain is Bromodomain testis-specific protein (BRDT), found in Homo sapiens (Human).